We begin with the raw amino-acid sequence, 267 residues long: Ribosomal RNA small subunit methyltransferase A (267 aa).

Positions 12, 14, 39, 60, 84, and 110 each coordinate S-adenosyl-L-methionine.

Belongs to the class I-like SAM-binding methyltransferase superfamily. rRNA adenine N(6)-methyltransferase family. RsmA subfamily.

The protein localises to the cytoplasm. It catalyses the reaction adenosine(1518)/adenosine(1519) in 16S rRNA + 4 S-adenosyl-L-methionine = N(6)-dimethyladenosine(1518)/N(6)-dimethyladenosine(1519) in 16S rRNA + 4 S-adenosyl-L-homocysteine + 4 H(+). Functionally, specifically dimethylates two adjacent adenosines (A1518 and A1519) in the loop of a conserved hairpin near the 3'-end of 16S rRNA in the 30S particle. May play a critical role in biogenesis of 30S subunits. This chain is Ribosomal RNA small subunit methyltransferase A, found in Mesoplasma florum (strain ATCC 33453 / NBRC 100688 / NCTC 11704 / L1) (Acholeplasma florum).